The primary structure comprises 389 residues: Urotensin-2 receptor (389 aa).

Polar residues-rich tracts occupy residues 1 to 10 (MALTPESPSS) and 28 to 39 (PNATLNSSWASP). The tract at residues 1–39 (MALTPESPSSFPGLAAIGSSVPEPPGSPNATLNSSWASP) is disordered. The Extracellular portion of the chain corresponds to 1–54 (MALTPESPSSFPGLAAIGSSVPEPPGSPNATLNSSWASPTEPSSLEDLVATGAI). 2 N-linked (GlcNAc...) asparagine glycosylation sites follow: N29 and N33. A helical transmembrane segment spans residues 55–77 (GTLLSAMGVVGVVGNAYTLVVTC). The Cytoplasmic segment spans residues 78–87 (RSLRAVASMY). Residues 88–113 (IYVVNLALADLLYLLSIPFIVATYIT) traverse the membrane as a helical segment. The Extracellular segment spans residues 114–124 (KEWHFGDVGCR). C123 and C199 are joined by a disulfide. The chain crosses the membrane as a helical span at residues 125–146 (VLFSLDFLTMHASIFTLTVMSS). The Cytoplasmic portion of the chain corresponds to 147-167 (ERYAAVLRPLDTVQRPKGYRK). The helical transmembrane segment at 168 to 186 (LLALGTWLLALLLTLPVML) threads the bilayer. Residues 187–209 (AMRLVRRGPKSLCLPAWGPRAHR) lie on the Extracellular side of the membrane. The helical transmembrane segment at 210 to 232 (AYLTLLFATSIAGPGLLIGLLYA) threads the bilayer. The Cytoplasmic segment spans residues 233 to 258 (RLARAYRRSQRASFKRARRPGARALR). A helical membrane pass occupies residues 259 to 284 (LVLGIVLLFWACFLPFWLWQLLAQYR). The Extracellular portion of the chain corresponds to 285-297 (EAPLAPRTARIVN). Residues 298–318 (YLTTCLTYGNSCANPFLYTLL) traverse the membrane as a helical segment. Topologically, residues 319 to 389 (TRNYRDHLRG…PALESPGDPA (71 aa)) are cytoplasmic. Residues 328–366 (GRVRSPGSGGVRGPVPSLQPRARFQRGSGRSLSSCSPQP) form a disordered region. Positions 355-366 (SGRSLSSCSPQP) are enriched in polar residues.

It belongs to the G-protein coupled receptor 1 family.

It localises to the cell membrane. High affinity receptor for urotensin-2 and urotensin-2B. The activity of this receptor is mediated by a G-protein that activate a phosphatidylinositol-calcium second messenger system. The chain is Urotensin-2 receptor (UTS2R) from Macaca mulatta (Rhesus macaque).